The primary structure comprises 338 residues: Anthranilate phosphoribosyltransferase (338 aa).

5-phospho-alpha-D-ribose 1-diphosphate-binding positions include glycine 78, glycine 81–aspartate 82, serine 86, asparagine 88–threonine 91, lysine 106–serine 114, and serine 118. Glycine 78 provides a ligand contact to anthranilate. Position 90 (serine 90) interacts with Mg(2+). An anthranilate-binding site is contributed by asparagine 109. Arginine 163 is a binding site for anthranilate. Mg(2+) contacts are provided by aspartate 222 and glutamate 223.

This sequence belongs to the anthranilate phosphoribosyltransferase family. As to quaternary structure, homodimer. It depends on Mg(2+) as a cofactor.

The catalysed reaction is N-(5-phospho-beta-D-ribosyl)anthranilate + diphosphate = 5-phospho-alpha-D-ribose 1-diphosphate + anthranilate. The protein operates within amino-acid biosynthesis; L-tryptophan biosynthesis; L-tryptophan from chorismate: step 2/5. In terms of biological role, catalyzes the transfer of the phosphoribosyl group of 5-phosphorylribose-1-pyrophosphate (PRPP) to anthranilate to yield N-(5'-phosphoribosyl)-anthranilate (PRA). The protein is Anthranilate phosphoribosyltransferase of Staphylococcus haemolyticus (strain JCSC1435).